A 372-amino-acid chain; its full sequence is Glutamate 5-kinase (372 aa).

Lys-14 serves as a coordination point for ATP. Ser-54, Asp-141, and Asn-153 together coordinate substrate. Residue 173-174 (TD) coordinates ATP. A PUA domain is found at 280-358 (RGTLTLDEGA…DEIEKLLGYV (79 aa)).

The protein belongs to the glutamate 5-kinase family.

The protein localises to the cytoplasm. It catalyses the reaction L-glutamate + ATP = L-glutamyl 5-phosphate + ADP. It functions in the pathway amino-acid biosynthesis; L-proline biosynthesis; L-glutamate 5-semialdehyde from L-glutamate: step 1/2. Catalyzes the transfer of a phosphate group to glutamate to form L-glutamate 5-phosphate. The chain is Glutamate 5-kinase from Stutzerimonas stutzeri (strain A1501) (Pseudomonas stutzeri).